The chain runs to 293 residues: Small ribosomal subunit biogenesis GTPase RsgA (293 aa).

Residues 63 to 223 form the CP-type G domain; it reads KNELVRPPIA…VADTPGFSSL (161 aa). GTP contacts are provided by residues 112–115 and 166–174; these read SKMD and GQSGVGKSS. Positions 247, 252, 254, and 260 each coordinate Zn(2+).

It belongs to the TRAFAC class YlqF/YawG GTPase family. RsgA subfamily. As to quaternary structure, monomer. Associates with 30S ribosomal subunit, binds 16S rRNA. It depends on Zn(2+) as a cofactor.

The protein localises to the cytoplasm. In terms of biological role, one of several proteins that assist in the late maturation steps of the functional core of the 30S ribosomal subunit. Helps release RbfA from mature subunits. May play a role in the assembly of ribosomal proteins into the subunit. Circularly permuted GTPase that catalyzes slow GTP hydrolysis, GTPase activity is stimulated by the 30S ribosomal subunit. This Bacillus cereus (strain ATCC 14579 / DSM 31 / CCUG 7414 / JCM 2152 / NBRC 15305 / NCIMB 9373 / NCTC 2599 / NRRL B-3711) protein is Small ribosomal subunit biogenesis GTPase RsgA.